The chain runs to 197 residues: Imidazoleglycerol-phosphate dehydratase (197 aa).

The protein belongs to the imidazoleglycerol-phosphate dehydratase family.

The protein resides in the cytoplasm. The catalysed reaction is D-erythro-1-(imidazol-4-yl)glycerol 3-phosphate = 3-(imidazol-4-yl)-2-oxopropyl phosphate + H2O. It participates in amino-acid biosynthesis; L-histidine biosynthesis; L-histidine from 5-phospho-alpha-D-ribose 1-diphosphate: step 6/9. The polypeptide is Imidazoleglycerol-phosphate dehydratase (Pseudomonas fluorescens (strain SBW25)).